Consider the following 306-residue polypeptide: Palmitoyl-protein thioesterase ABHD10, mitochondrial (306 aa).

The N-terminal 52 residues, 1–52 (MAVARLAAVAAWVPCRSWGWAAVPFGPHRGLSVLLARIPQRAPRWLPACRQK), are a transit peptide targeting the mitochondrion. The 101-residue stretch at 78-178 (IIFIPGYLSY…VVALIGVATA (101 aa)) folds into the AB hydrolase-1 domain. Active-site charge relay system residues include Ser152, Asp249, and His279.

This sequence belongs to the AB hydrolase superfamily.

It localises to the mitochondrion. It catalyses the reaction S-hexadecanoyl-L-cysteinyl-[protein] + H2O = L-cysteinyl-[protein] + hexadecanoate + H(+). The catalysed reaction is mycophenolic acid O-acyl-beta-D-glucuronide + H2O = mycophenolate + D-glucuronate + H(+). Inhibited by palmostatin-B. In terms of biological role, acts as an acyl-protein thioesterase that hydrolyzes fatty acids from acylated residues in proteins. Regulates the mitochondrial S-depalmitoylation of the nucleophilic active site residue of peroxiredoxin-5/PRDX5, a key antioxidant protein, therefore modulating mitochondrial antioxidant ability. Also catalyzes the deglucuronidation of mycophenolic acid acyl-glucuronide, an active metabolite of the immunosuppressant drug mycophenolate. This Homo sapiens (Human) protein is Palmitoyl-protein thioesterase ABHD10, mitochondrial.